The chain runs to 445 residues: Protein phosphatase 2C 53 (445 aa).

The region spanning 124–435 is the PPM-type phosphatase domain; that stretch reads LWGLESICGR…DNITVVVIDL (312 aa). Mn(2+) is bound by residues Asp-180, Gly-181, Asp-362, and Asp-426.

This sequence belongs to the PP2C family. In terms of assembly, interacts with PYL10, SAPK8 and SAPK10. Binding to PYL10 is dependent on the presence of abscisic acid (ABA). Interacts with PYL3, PYL5, PYL9 and PYL10. Binding to PYL9 and PYL10 is dependent on the presence of ABA. Mg(2+) serves as cofactor. The cofactor is Mn(2+). Expressed in leaf blades, leaf sheaths and lamina joints. Expressed at low levels in roots, stems, flowers and panicles.

It localises to the cytoplasm. It is found in the cytosol. The protein localises to the nucleus. The catalysed reaction is O-phospho-L-seryl-[protein] + H2O = L-seryl-[protein] + phosphate. It carries out the reaction O-phospho-L-threonyl-[protein] + H2O = L-threonyl-[protein] + phosphate. With respect to regulation, repressed by abscisic acid-bound PYL1. Its function is as follows. Protein phosphatase that acts as a negative regulator of abscisic acid (ABA) signaling. Involved in the regulation of root architecture development and drought resistance. Can dephosphorylate SAPK8 and SAPK10 in vitro. Together with PYL10, SAPK8 and SAPK10, may form an ABA signaling module involved in stress response. The polypeptide is Protein phosphatase 2C 53 (Oryza sativa subsp. japonica (Rice)).